Consider the following 214-residue polypeptide: 3,4-dihydroxy-2-butanone 4-phosphate synthase (214 aa).

Residues 40 to 41 (RE), Asp-45, 153 to 157 (RRGHT), and Glu-177 contribute to the D-ribulose 5-phosphate site. Glu-41 provides a ligand contact to Mg(2+). Mg(2+) is bound at residue His-156.

It belongs to the DHBP synthase family. In terms of assembly, homodimer. Mg(2+) serves as cofactor. Mn(2+) is required as a cofactor.

The catalysed reaction is D-ribulose 5-phosphate = (2S)-2-hydroxy-3-oxobutyl phosphate + formate + H(+). Its pathway is cofactor biosynthesis; riboflavin biosynthesis; 2-hydroxy-3-oxobutyl phosphate from D-ribulose 5-phosphate: step 1/1. In terms of biological role, catalyzes the conversion of D-ribulose 5-phosphate to formate and 3,4-dihydroxy-2-butanone 4-phosphate. This is 3,4-dihydroxy-2-butanone 4-phosphate synthase from Rhodospirillum rubrum (strain ATCC 11170 / ATH 1.1.1 / DSM 467 / LMG 4362 / NCIMB 8255 / S1).